A 930-amino-acid chain; its full sequence is Xanthan lyase (930 aa).

The N-terminal stretch at 1–25 (MLSGILIAALLMTLWGGWQPDIAHA) is a signal peptide. Residues 146 to 148 (NWW), His246, Tyr255, Arg309, 313 to 315 (RSY), and Asn424 each bind xanthan. Tyr255 (proton donor/acceptor) is an active-site residue. The Ca(2+) site is built by Asp515, Asp516, and Glu517. Residue Arg612 participates in xanthan binding. Glu676 is a binding site for Ca(2+).

Belongs to the polysaccharide lyase 8 family. Monomer.

It localises to the secreted. It catalyses the reaction Eliminative cleavage of the terminal beta-D-mannosyl-(1-&gt;4)-beta-D-glucuronosyl linkage of the side-chain of the polysaccharide xanthan, leaving a 4-deoxy-alpha-L-threo-hex-4-enuronosyl group at the terminus of the side-chain.. Activated by Co(2+) at 1 mM. Completely inhibited by Hg(2+) but not affected by other divalent cations. Intensely inhibited by NaCl and KCl at 150 mM, in particular by the Na(+) and K(+) ions but not the Cl(-) ions. Partially inhibited by iodoacetamide and N-ethylmaleimide at 1 mM but not by dithiothreitol, reduced glutathione or 2-mercaptoethanol. In terms of biological role, plays a role in xanthan depolymerization pathway by cleaving the linkage between the terminal mannosyl and glucuronyl residues of the side chain of xanthan to liberate pyruvylated mannose. Is highly specific for pyruvylated side-chains of xanthan and is not effective with hyaluronate, chondroitin A, gellan, heparin or pectin. In Bacillus sp. (strain GL1), this protein is Xanthan lyase.